Consider the following 193-residue polypeptide: Protein GrpE (193 aa).

Positions 1–22 are enriched in basic and acidic residues; it reads MDPKEKEKMAEELNVEETKDTA. Residues 1–45 form a disordered region; it reads MDPKEKEKMAEELNVEETKDTAEEQPQDDQAEEAAPLTHEEQLEK. Acidic residues predominate over residues 23–32; sequence EEQPQDDQAE.

The protein belongs to the GrpE family. As to quaternary structure, homodimer.

The protein localises to the cytoplasm. In terms of biological role, participates actively in the response to hyperosmotic and heat shock by preventing the aggregation of stress-denatured proteins, in association with DnaK and GrpE. It is the nucleotide exchange factor for DnaK and may function as a thermosensor. Unfolded proteins bind initially to DnaJ; upon interaction with the DnaJ-bound protein, DnaK hydrolyzes its bound ATP, resulting in the formation of a stable complex. GrpE releases ADP from DnaK; ATP binding to DnaK triggers the release of the substrate protein, thus completing the reaction cycle. Several rounds of ATP-dependent interactions between DnaJ, DnaK and GrpE are required for fully efficient folding. The protein is Protein GrpE of Bacteroides thetaiotaomicron (strain ATCC 29148 / DSM 2079 / JCM 5827 / CCUG 10774 / NCTC 10582 / VPI-5482 / E50).